Consider the following 304-residue polypeptide: Nod factor export ATP-binding protein I (304 aa).

Positions 6-236 constitute an ABC transporter domain; sequence IDFQQVEKRY…EIGCDVIEIY (231 aa). 38 to 45 contributes to the ATP binding site; the sequence is GPNGAGKT.

The protein belongs to the ABC transporter superfamily. Lipooligosaccharide exporter (TC 3.A.1.102) family. The complex is composed of two ATP-binding proteins (NodI) and two transmembrane proteins (NodJ).

It is found in the cell inner membrane. Part of the ABC transporter complex NodIJ involved in the export of the nodulation factors (Nod factors), the bacterial signal molecules that induce symbiosis and subsequent nodulation induction. Nod factors are LCO (lipo-chitin oligosaccharide), a modified beta-1,4-linked N-acetylglucosamine oligosaccharide. This subunit is responsible for energy coupling to the transport system. The sequence is that of Nod factor export ATP-binding protein I from Burkholderia pseudomallei (strain K96243).